We begin with the raw amino-acid sequence, 949 residues long: Serine/threonine-protein kinase KIPK2 (949 aa).

Disordered regions lie at residues 79-116 (LETS…VGPS), 323-344 (TALS…TEKS), 407-426 (STST…DKNV), and 495-525 (SSEK…SNLS). Low complexity predominate over residues 81-94 (TSASAGTSRSTSPS). Polar residues-rich tracts occupy residues 407-420 (STST…NTSH) and 495-512 (SSEK…LGDY). Positions 513-525 (SSSTSMSEESNLS) are enriched in low complexity. Residues 559–898 (FNLLKKLGCG…AAEIKRHPFF (340 aa)) enclose the Protein kinase domain. ATP is bound by residues 565–573 (LGCGDIGTV) and Lys588. Asp684 (proton acceptor) is an active-site residue.

The protein belongs to the protein kinase superfamily. Ser/Thr protein kinase family. As to quaternary structure, interacts with KCBP, PERK8, PERK9, PERK10 and PERK13.

The enzyme catalyses L-seryl-[protein] + ATP = O-phospho-L-seryl-[protein] + ADP + H(+). It catalyses the reaction L-threonyl-[protein] + ATP = O-phospho-L-threonyl-[protein] + ADP + H(+). Serine/threonine-protein kinase that could be involved in the negative regulation of root growth. The sequence is that of Serine/threonine-protein kinase KIPK2 from Arabidopsis thaliana (Mouse-ear cress).